A 473-amino-acid polypeptide reads, in one-letter code: Nuclear distribution protein PAC1 (473 aa).

The LisH domain maps to 9–41; it reads QAEELHKSIIAYFLSAKLPKSAAALREEIADSV. A coiled-coil region spans residues 60–87; sequence TSVVRLQKKIMDLEARNSALQSELDSAT. Polar residues predominate over residues 80-93; that stretch reads QSELDSATPTSLSR. The disordered stretch occupies residues 80–99; the sequence is QSELDSATPTSLSRRNQDPV. WD repeat units follow at residues 113 to 154, 156 to 196, 200 to 247, 250 to 289, 292 to 352, 354 to 393, 397 to 434, and 435 to 472; these read SHRN…RTIK, HTRA…KNIR, GHDH…CVRT, GHVE…TKST, GHEH…IKTL, GHDN…KCVR, DAHA…ALSG, and VNGI…RVFA.

It belongs to the WD repeat LIS1/nudF family. As to quaternary structure, self-associates. Interacts with NDL1 and dynein.

Its subcellular location is the cytoplasm. It localises to the cytoskeleton. The protein localises to the spindle pole. In terms of biological role, positively regulates the activity of the minus-end directed microtubule motor protein dynein. May enhance dynein-mediated microtubule sliding by targeting dynein to the microtubule plus end. Required for nuclear migration during vegetative growth as well as development. Required for retrograde early endosome (EE) transport from the hyphal tip. Required for localization of dynein to the mitotic spindle poles. Recruits additional proteins to the dynein complex at SPBs. The protein is Nuclear distribution protein PAC1 of Ajellomyces dermatitidis (strain ER-3 / ATCC MYA-2586) (Blastomyces dermatitidis).